Here is a 348-residue protein sequence, read N- to C-terminus: SUMO-activating enzyme subunit 1 (348 aa).

This sequence belongs to the ubiquitin-activating E1 family. In terms of assembly, heterodimer of sae1 and uba2/sae2. The heterodimer corresponds to the two domains that are encoded on a single polypeptide chain in ubiquitin-activating enzyme E1. Interacts with ube2i.

It is found in the nucleus. Its pathway is protein modification; protein sumoylation. The heterodimer acts as an E1 ligase for sumo1, sumo2, and sumo3. It mediates ATP-dependent activation of sumo proteins followed by formation of a thioester bond between a sumo protein and a conserved active site cysteine residue on uba2/sae2. This chain is SUMO-activating enzyme subunit 1 (sae1), found in Danio rerio (Zebrafish).